The sequence spans 92 residues: UPF0250 protein Rmag_0541 (92 aa).

The protein belongs to the UPF0250 family.

The chain is UPF0250 protein Rmag_0541 from Ruthia magnifica subsp. Calyptogena magnifica.